The primary structure comprises 409 residues: Diels-Alderase ucsH (409 aa).

Residues 386–406 form a helical membrane-spanning segment; sequence IYFFICMLLAVVTFGYINILE.

This sequence belongs to the Diels-Alderase family.

It is found in the membrane. The protein operates within mycotoxin biosynthesis. Diels-Alderase; part of the gene cluster that mediates the biosynthesis of UCS1025A, a member of the pyrrolizidinone family that acts as a strong telomerase inhibitor and displays potent antibacterial and antitumor properties. These compounds share a hemiaminal-containing pyrrolizidinone core fused with a gamma-lactone, giving a furopyrrolizidine that is connected to a decalin fragment. The polyketide synthase module (PKS) of the PKS-NRPS ucsA is responsible for the synthesis of the polyketide backbone via the condensation of an acetyl-CoA starter unit with 6 malonyl-CoA units. The downstream nonribosomal peptide synthetase (NRPS) module then amidates the carboxyl end of the polyketide with a 2S,3S-methylproline derived from L-isoleucine by the 2-oxoglutarate-dependent dioxygenase ucsF which converts L-isoleucine to (4S,5S)-4-methylpyrroline-5-carboxylate that is further converted to 2S,3S-methylproline by the pyrroline-5-carboxylate reductase ucsG. Reductive release of the completed aminoacyl polyketide from the assembly line can form the 3-pyrrolin-2-one structure via an intramolecular Knoevenagel reaction. Because ucsA lacks a designated enoylreductase (ER) domain, the required activity is provided the enoyl reductase ucsL. This keto acyclic precursor is the substrate of the Diels-Alderase ucsH, that catalyzes the Diels-Alder cycloaddition. Oxidation of the 3S-methyl group to a carboxylate by the cytochrome P450 monooxygenase ucsK allows an oxa-Michael cyclization that might involve the reductase/dehydrogenase ucsI and which furnishes the furopyrrolizidine. The oxidase ucsJ likely plays a critical role in stereoselective reduction of the C5-C6 double bond to afford the required R-configured carboxylate group. Further enolization and oxidation at C5 by an unidentified enzyme affords the last intermediate that can undergo oxa-Michael cyclization to yield UCS1025A. The protein is Diels-Alderase ucsH of Acremonium sp.